The sequence spans 334 residues: Protein-methionine-sulfoxide reductase catalytic subunit MsrP (334 aa).

A signal peptide (tat-type signal) is located at residues 1–44; sequence MKKIRPLTEADVTAESAFFMQRRQVLKALGISAAALSLPSTAQA. Mo-molybdopterin-binding positions include asparagine 88, 91–92, cysteine 146, threonine 181, asparagine 233, arginine 238, and 249–251; these read YE and GIK.

This sequence belongs to the MsrP family. Heterodimer of a catalytic subunit (MsrP) and a heme-binding subunit (MsrQ). The cofactor is Mo-molybdopterin. Post-translationally, predicted to be exported by the Tat system. The position of the signal peptide cleavage has not been experimentally proven.

It localises to the periplasm. The enzyme catalyses L-methionyl-[protein] + a quinone + H2O = L-methionyl-(S)-S-oxide-[protein] + a quinol. It carries out the reaction L-methionyl-[protein] + a quinone + H2O = L-methionyl-(R)-S-oxide-[protein] + a quinol. In terms of biological role, part of the MsrPQ system that repairs oxidized periplasmic proteins containing methionine sulfoxide residues (Met-O), using respiratory chain electrons. Thus protects these proteins from oxidative-stress damage caused by reactive species of oxygen and chlorine generated by the host defense mechanisms. MsrPQ is essential for the maintenance of envelope integrity under bleach stress, rescuing a wide series of structurally unrelated periplasmic proteins from methionine oxidation, including the primary periplasmic chaperone SurA and the lipoprotein Pal. The catalytic subunit MsrP is non-stereospecific, being able to reduce both (R-) and (S-) diastereoisomers of methionine sulfoxide. This chain is Protein-methionine-sulfoxide reductase catalytic subunit MsrP, found in Salmonella dublin (strain CT_02021853).